A 162-amino-acid chain; its full sequence is NADH-quinone oxidoreductase subunit I (162 aa).

4Fe-4S ferredoxin-type domains lie at 52-82 (LRRYPNGEERCIACKLCEAICPAQAITIEAG) and 93-122 (VRYDIDMVKCIYCGLCQEACPVDAIVEGPN). The [4Fe-4S] cluster site is built by Cys-62, Cys-65, Cys-68, Cys-72, Cys-102, Cys-105, Cys-108, and Cys-112.

The protein belongs to the complex I 23 kDa subunit family. NDH-1 is composed of 14 different subunits. Subunits NuoA, H, J, K, L, M, N constitute the membrane sector of the complex. [4Fe-4S] cluster is required as a cofactor.

The protein resides in the cell inner membrane. It carries out the reaction a quinone + NADH + 5 H(+)(in) = a quinol + NAD(+) + 4 H(+)(out). Functionally, NDH-1 shuttles electrons from NADH, via FMN and iron-sulfur (Fe-S) centers, to quinones in the respiratory chain. The immediate electron acceptor for the enzyme in this species is believed to be ubiquinone. Couples the redox reaction to proton translocation (for every two electrons transferred, four hydrogen ions are translocated across the cytoplasmic membrane), and thus conserves the redox energy in a proton gradient. In Nitrobacter hamburgensis (strain DSM 10229 / NCIMB 13809 / X14), this protein is NADH-quinone oxidoreductase subunit I.